Reading from the N-terminus, the 488-residue chain is Aspartyl/glutamyl-tRNA(Asn/Gln) amidotransferase subunit B (488 aa).

Belongs to the GatB/GatE family. GatB subfamily. Heterotrimer of A, B and C subunits.

The catalysed reaction is L-glutamyl-tRNA(Gln) + L-glutamine + ATP + H2O = L-glutaminyl-tRNA(Gln) + L-glutamate + ADP + phosphate + H(+). It carries out the reaction L-aspartyl-tRNA(Asn) + L-glutamine + ATP + H2O = L-asparaginyl-tRNA(Asn) + L-glutamate + ADP + phosphate + 2 H(+). Functionally, allows the formation of correctly charged Asn-tRNA(Asn) or Gln-tRNA(Gln) through the transamidation of misacylated Asp-tRNA(Asn) or Glu-tRNA(Gln) in organisms which lack either or both of asparaginyl-tRNA or glutaminyl-tRNA synthetases. The reaction takes place in the presence of glutamine and ATP through an activated phospho-Asp-tRNA(Asn) or phospho-Glu-tRNA(Gln). This Ralstonia pickettii (strain 12J) protein is Aspartyl/glutamyl-tRNA(Asn/Gln) amidotransferase subunit B.